The primary structure comprises 142 residues: Hemoglobin subunit alpha-A (142 aa).

Residues 2–142 enclose the Globin domain; sequence VLSANDKSNV…VGTVLTAKYR (141 aa). H59 is a binding site for O2. H88 is a binding site for heme b.

Belongs to the globin family. Heterotetramer of two alpha chains and two beta chains. In terms of tissue distribution, red blood cells.

Involved in oxygen transport from the lung to the various peripheral tissues. The protein is Hemoglobin subunit alpha-A (HBAA) of Columba livia (Rock dove).